Reading from the N-terminus, the 200-residue chain is CASP-like protein 1D2 (200 aa).

A disordered region spans residues 1–26 (MASTENPDPETGKSEPIPASATTPPP). At 1 to 36 (MASTENPDPETGKSEPIPASATTPPPSAASFLDCRK) the chain is on the cytoplasmic side. A helical membrane pass occupies residues 37–57 (IDVIIRVLLFSATLTALIVMV). Over 58–85 (TSDQTEKTQLPGVSSPAPVSAEFNDSPA) the chain is Extracellular. A helical transmembrane segment spans residues 86–106 (FIFFVVALVVTSFYALMSTLV). At 107–129 (SISLLLKPEFTARVSVYLASLDM) the chain is on the cytoplasmic side. Residues 130 to 150 (VMLGILASATGTAGGVAYIAL) traverse the membrane as a helical segment. The Extracellular segment spans residues 151 to 171 (KGNKEVGWNKICNVYDKFCRY). A helical transmembrane segment spans residues 172 to 192 (IATSLALSLFATLLLLVLSIC). Topologically, residues 193–200 (SALSKRTP) are cytoplasmic.

The protein belongs to the Casparian strip membrane proteins (CASP) family. As to quaternary structure, homodimer and heterodimers.

It localises to the cell membrane. This Arabidopsis lyrata subsp. lyrata (Lyre-leaved rock-cress) protein is CASP-like protein 1D2.